The following is a 354-amino-acid chain: Fusarinine C esterase sidJ (354 aa).

Belongs to the sidJ hydrolase family. Homodimer.

The enzyme catalyses fusarinine C + 3 H2O = 3 fusarinine + Fe(3+). Functionally, displays specific fusarinine C (FsC) esterase activity but does not hydrolyze triacetylfusarinine C (TAFC), which has the same core structure as fusarinine C. Both extra- and intracellular siderophores have been shown to be crucial for the virulence. Subsequent to chelation of iron and uptake, FsC and TAFC are hydrolyzed and the iron is transferred to the metabolism or to the intracellular siderophore ferricrocin (FC) for transport and storage of iron. This chain is Fusarinine C esterase sidJ, found in Aspergillus fumigatus (strain ATCC MYA-4609 / CBS 101355 / FGSC A1100 / Af293) (Neosartorya fumigata).